The following is a 144-amino-acid chain: MRFNELQPAKGSRFAGKRLGRGIGSGLGKTSGKGHKGQKARSGGYHKVGFEGGQMPLQRRLPKRGFRSLKKLGTARIRLSELQKIDAEVIDLNALKAAGLASERAVAAKVYLNGTISKAVTLRGVSISAGAKAALEAAGGSVEE.

The segment at 1-57 (MRFNELQPAKGSRFAGKRLGRGIGSGLGKTSGKGHKGQKARSGGYHKVGFEGGQMPL) is disordered. The segment covering 21-31 (RGIGSGLGKTS) has biased composition (gly residues).

This sequence belongs to the universal ribosomal protein uL15 family. Part of the 50S ribosomal subunit.

Its function is as follows. Binds to the 23S rRNA. This is Large ribosomal subunit protein uL15 from Dichelobacter nodosus (strain VCS1703A).